We begin with the raw amino-acid sequence, 78 residues long: Ferredoxin oxidoreductase 2 subunit ForD (78 aa).

2 4Fe-4S ferredoxin-type domains span residues Phe-3–Ser-35 and Asn-37–Glu-66. [4Fe-4S] cluster contacts are provided by Cys-12, Cys-17, Cys-20, Cys-24, Cys-46, Cys-49, Cys-52, and Cys-56.

Heterotetramer of one alpha, one beta, one delta and one gamma chain. [4Fe-4S] cluster serves as cofactor.

The chain is Ferredoxin oxidoreductase 2 subunit ForD (forD2) from Aquifex aeolicus (strain VF5).